We begin with the raw amino-acid sequence, 337 residues long: Glyceraldehyde-3-phosphate dehydrogenase 1, cytosolic (337 aa).

The tract at residues 1–151 (MGKIKIGING…YTSDVNIVSN (151 aa)) is binding to NAD. Residues 13-14 (RI), Asp35, and Arg82 contribute to the NAD(+) site. Residues 152-337 (ASCTTNCLAP…DLIRHMFKTQ (186 aa)) form a catalytic region. Residues 153–155 (SCT), Thr184, 213–214 (TG), and Arg236 contribute to the D-glyceraldehyde 3-phosphate site. The active-site Nucleophile is the Cys154. Asn318 contributes to the NAD(+) binding site.

This sequence belongs to the glyceraldehyde-3-phosphate dehydrogenase family. In terms of assembly, homotetramer.

It localises to the cytoplasm. It catalyses the reaction D-glyceraldehyde 3-phosphate + phosphate + NAD(+) = (2R)-3-phospho-glyceroyl phosphate + NADH + H(+). It functions in the pathway carbohydrate degradation; glycolysis; pyruvate from D-glyceraldehyde 3-phosphate: step 1/5. Its function is as follows. Key enzyme in glycolysis that catalyzes the first step of the pathway by converting D-glyceraldehyde 3-phosphate (G3P) into 3-phospho-D-glyceroyl phosphate. Essential for the maintenance of cellular ATP levels and carbohydrate metabolism. This chain is Glyceraldehyde-3-phosphate dehydrogenase 1, cytosolic (GAPC1), found in Zea mays (Maize).